The sequence spans 546 residues: Undecaprenyl phosphate-alpha-4-amino-4-deoxy-L-arabinose arabinosyl transferase (546 aa).

Helical transmembrane passes span 6 to 26 (INLAVIVPLFFIMLYLLPLGL), 87 to 107 (AASAFSTLGAAFCLFLLVGRF), 113 to 133 (AWVTVSVFLSLFLVSNLGTYS), 177 to 197 (LLTKGFLALALPVIVVVPFMI), 208 to 228 (WGWWVMLVALIVTLPWALAIH), 260 to 280 (YYLPYLLLGTLPWLFLAPSAI), 289 to 309 (SPLLRYALLWALIPFIFFSAA), 313 to 333 (LVTYILPCMAPLAIILAQGII), 345 to 365 (IGSVINCAFFSLISVAVIVLF), 380 to 400 (PWLLVVVCGSWAVLAYISIKA), 410 to 430 (YMLMPLSLFLLAWAIIPNISI), and 450 to 467 (AILIADYPSTMSAFNWYF).

Belongs to the glycosyltransferase 83 family.

Its subcellular location is the cell inner membrane. It carries out the reaction 4-amino-4-deoxy-alpha-L-arabinopyranosyl di-trans,octa-cis-undecaprenyl phosphate + lipid IVA = lipid IIA + di-trans,octa-cis-undecaprenyl phosphate.. The protein operates within lipopolysaccharide metabolism; 4-amino-4-deoxy-beta-L-arabinose-lipid A biosynthesis. In terms of biological role, catalyzes the transfer of the L-Ara4N moiety of the glycolipid undecaprenyl phosphate-alpha-L-Ara4N to lipid A. The modified arabinose is attached to lipid A and is required for resistance to polymyxin and cationic antimicrobial peptides. The sequence is that of Undecaprenyl phosphate-alpha-4-amino-4-deoxy-L-arabinose arabinosyl transferase from Shewanella sediminis (strain HAW-EB3).